Reading from the N-terminus, the 123-residue chain is Sterol carrier protein 2 (123 aa).

One can recognise an SCP2 domain in the interval 16 to 113 (KEHLSTDAGK…GSLSAAQKFT (98 aa)). The Microbody targeting signal signature appears at 121-123 (SKL).

As to expression, expressed in most tissues including seedlings, cotyledons, inflorescence, leaves, stems, roots, siliques and flower buds, with the highest levels in floral tissues and in maturing seeds.

The protein resides in the peroxisome. Its function is as follows. Enhances the transfer of lipids between membranes in vitro. Active on phosphatidylcholine (PC), 1-palmitoyl 2-oleoyl phosphatidylcholine (POPC) and ergosterol, and, to a lower extent, dimyristoyl phosphatidic acid, stigmasterol, desmosterol, beta-sitosterol and steryl glucoside. Inactive or poorly active on palmitic acid, stearoyl-coenzyme A, cholesterol, glucosylceramide and ceramide. Required during seeds and seedlings development. The protein is Sterol carrier protein 2 of Arabidopsis thaliana (Mouse-ear cress).